The following is a 531-amino-acid chain: 2,3-bisphosphoglycerate-independent phosphoglycerate mutase (531 aa).

Mn(2+)-binding residues include aspartate 13 and serine 63. Serine 63 acts as the Phosphoserine intermediate in catalysis. Residues histidine 124, 154 to 155 (RD), arginine 187, arginine 193, 261 to 264 (RPDR), and lysine 342 each bind substrate. Residues aspartate 420, histidine 424, aspartate 462, histidine 463, and histidine 480 each coordinate Mn(2+).

Belongs to the BPG-independent phosphoglycerate mutase family. As to quaternary structure, monomer. Mn(2+) serves as cofactor.

It catalyses the reaction (2R)-2-phosphoglycerate = (2R)-3-phosphoglycerate. Its pathway is carbohydrate degradation; glycolysis; pyruvate from D-glyceraldehyde 3-phosphate: step 3/5. Its function is as follows. Catalyzes the interconversion of 2-phosphoglycerate and 3-phosphoglycerate. This is 2,3-bisphosphoglycerate-independent phosphoglycerate mutase from Mycoplasma capricolum subsp. capricolum (strain California kid / ATCC 27343 / NCTC 10154).